Here is a 281-residue protein sequence, read N- to C-terminus: sn-glycerol-3-phosphate transport system permease protein UgpE (281 aa).

Transmembrane regions (helical) follow at residues 14 to 34, 85 to 105, 113 to 133, 142 to 162, 201 to 221, and 247 to 267; these read IMLIIGVLLILFPLYVAFVAA, FAITVGKITVSILSAYAIVYF, FFWLIFLTLMLPVEVRIFPTI, LDSYTGLTLPLMASATATFLF, AALFVITFIYGWNQYLWPILI, and WNQVMAAMILTLIPPVVVVLL. The ABC transmembrane type-1 domain maps to 77–268; sequence LLNSFVMAFA…IPPVVVVLLM (192 aa).

This sequence belongs to the binding-protein-dependent transport system permease family. UgpAE subfamily. In terms of assembly, the complex is composed of two ATP-binding proteins (UgpC), two transmembrane proteins (UgpA and UgpE) and a solute-binding protein (UgpB).

The protein localises to the cell inner membrane. Part of the ABC transporter complex UgpBAEC involved in sn-glycerol-3-phosphate (G3P) import. Probably responsible for the translocation of the substrate across the membrane. In Yersinia pestis bv. Antiqua (strain Antiqua), this protein is sn-glycerol-3-phosphate transport system permease protein UgpE (ugpE).